Consider the following 181-residue polypeptide: Adenine phosphoribosyltransferase (181 aa).

The protein belongs to the purine/pyrimidine phosphoribosyltransferase family. As to quaternary structure, homodimer.

It is found in the cytoplasm. It carries out the reaction AMP + diphosphate = 5-phospho-alpha-D-ribose 1-diphosphate + adenine. The protein operates within purine metabolism; AMP biosynthesis via salvage pathway; AMP from adenine: step 1/1. Catalyzes a salvage reaction resulting in the formation of AMP, that is energically less costly than de novo synthesis. The protein is Adenine phosphoribosyltransferase of Vibrio atlanticus (strain LGP32) (Vibrio splendidus (strain Mel32)).